Reading from the N-terminus, the 419-residue chain is L-rhamnose isomerase (419 aa).

3 residues coordinate Mn(2+): His-262, Asp-294, and Asp-296.

This sequence belongs to the rhamnose isomerase family. In terms of assembly, homotetramer. Mn(2+) is required as a cofactor.

It localises to the cytoplasm. It catalyses the reaction L-rhamnopyranose = L-rhamnulose. The protein operates within carbohydrate degradation; L-rhamnose degradation; glycerone phosphate from L-rhamnose: step 1/3. Its function is as follows. Catalyzes the interconversion of L-rhamnose and L-rhamnulose. The sequence is that of L-rhamnose isomerase from Salmonella newport (strain SL254).